A 298-amino-acid polypeptide reads, in one-letter code: UDP-N-acetylenolpyruvoylglucosamine reductase (298 aa).

One can recognise an FAD-binding PCMH-type domain in the interval 27–191 (TGGEADVFVM…LDATFSLALE (165 aa)). Arg170 is a catalytic residue. Residue Ser220 is the Proton donor of the active site. Glu290 is an active-site residue.

The protein belongs to the MurB family. FAD is required as a cofactor.

It is found in the cytoplasm. It carries out the reaction UDP-N-acetyl-alpha-D-muramate + NADP(+) = UDP-N-acetyl-3-O-(1-carboxyvinyl)-alpha-D-glucosamine + NADPH + H(+). The protein operates within cell wall biogenesis; peptidoglycan biosynthesis. In terms of biological role, cell wall formation. The chain is UDP-N-acetylenolpyruvoylglucosamine reductase from Listeria monocytogenes serotype 4a (strain HCC23).